The sequence spans 1615 residues: Ferredoxin-dependent glutamate synthase, chloroplastic (1615 aa).

The N-terminal 52 residues, 1–52, are a transit peptide targeting the chloroplast; that stretch reads MATLPRAAAAAAPSPAAALLPLPRAAPLLAGRAAARSAARRLRARGTRAPPL. Residue cysteine 97 is the Nucleophile of the active site. A Glutamine amidotransferase type-2 domain is found at 97 to 496; the sequence is CGVGFVANLK…PGMMITVDLQ (400 aa). Position 1175–1232 (1175–1232) interacts with FMN; that stretch reads LSETHQTLIQNGLRERVVLRVDGGFRSGLDVLMAAAMGADEYGFGSVAMIATGCVMAR. [3Fe-4S] cluster-binding residues include cysteine 1228, cysteine 1234, and cysteine 1239.

This sequence belongs to the glutamate synthase family. [3Fe-4S] cluster serves as cofactor. Requires FAD as cofactor. The cofactor is FMN. In terms of tissue distribution, expressed in leaf blades and at lower levels in roots.

Its subcellular location is the plastid. The protein resides in the chloroplast. The catalysed reaction is 2 oxidized [2Fe-2S]-[ferredoxin] + 2 L-glutamate = L-glutamine + 2 reduced [2Fe-2S]-[ferredoxin] + 2-oxoglutarate + 2 H(+). It functions in the pathway amino-acid biosynthesis; L-glutamate biosynthesis via GLT pathway; L-glutamate from 2-oxoglutarate and L-glutamine (ferredoxin route): step 1/1. It participates in energy metabolism; nitrogen metabolism. Functionally, involved in glutamate biosynthesis in leaf. Required for the reassimilation of ammonium ions generated during photorespiration. In Oryza sativa subsp. japonica (Rice), this protein is Ferredoxin-dependent glutamate synthase, chloroplastic (GLU).